The chain runs to 66 residues: Large ribosomal subunit protein bL33c (66 aa).

The protein belongs to the bacterial ribosomal protein bL33 family.

It is found in the plastid. The protein resides in the chloroplast. In Angiopteris evecta (Mule's foot fern), this protein is Large ribosomal subunit protein bL33c.